The following is a 196-amino-acid chain: RNA-binding protein with multiple splicing 2 (196 aa).

Positions 20-97 constitute an RRM domain; the sequence is RTLFVSGLPI…QTLRLEFAKA (78 aa). An important for homodimerization region spans residues 30–40; the sequence is DIKPRELYLLF.

As to quaternary structure, homodimer. In terms of tissue distribution, expressed in developing heart, pronephros, retina and epiphysis. In adult, high expression in heart, moderate in kidney, undetectable in liver, lung and skeletal muscle.

The protein localises to the cytoplasm. Its subcellular location is the nucleus. It is found in the stress granule. Its function is as follows. RNA-binding protein involved in the regulation of smooth muscle cell differentiation and proliferation in the gastrointestinal system. Binds NOG mRNA, the major inhibitor of the bone morphogenetic protein (BMP) pathway. Mediates an increase of NOG mRNA levels, thereby contributing to the negative regulation of BMP signaling pathway and promoting reversible dedifferentiation and proliferation of smooth muscle cells. Acts as a pre-mRNA alternative splicing regulator. Mediates ACTN1 and FLNB alternative splicing. Likely binds to mRNA tandem CAC trinucleotide or CA dinucleotide motifs. In Xenopus laevis (African clawed frog), this protein is RNA-binding protein with multiple splicing 2.